Reading from the N-terminus, the 259-residue chain is Kallikrein 1-related peptidase b22 (259 aa).

Residues 1–17 (MRFLILFLTLSLGGIDA) form the signal peptide. Positions 18–24 (APPVQSR) are cleaved as a propeptide — activation peptide. In terms of domain architecture, Peptidase S1 spans 25–256 (ILGGFKCEKN…FTSWIKDTMA (232 aa)). Cystine bridges form between Cys31/Cys171, Cys50/Cys66, Cys150/Cys217, Cys182/Cys196, and Cys207/Cys232. His65 functions as the Charge relay system in the catalytic mechanism. Asn102 carries an N-linked (GlcNAc...) asparagine glycan. The active-site Charge relay system is the Asp118. Ser211 functions as the Charge relay system in the catalytic mechanism.

Belongs to the peptidase S1 family. Kallikrein subfamily.

It carries out the reaction Preferential cleavage of Arg-|-Xaa bonds in small molecule substrates. Highly selective action to release kallidin (lysyl-bradykinin) from kininogen involves hydrolysis of Met-|-Xaa or Leu-|-Xaa.. In terms of biological role, glandular kallikreins cleave Met-Lys and Arg-Ser bonds in kininogen to release Lys-bradykinin. The chain is Kallikrein 1-related peptidase b22 (Klk1b22) from Mus musculus (Mouse).